A 1204-amino-acid polypeptide reads, in one-letter code: DNA-directed RNA polymerase subunit beta' (1204 aa).

4 residues coordinate Zn(2+): cysteine 60, cysteine 62, cysteine 75, and cysteine 78. Mg(2+) is bound by residues aspartate 449, aspartate 451, and aspartate 453. The Zn(2+) site is built by cysteine 819, cysteine 893, cysteine 900, and cysteine 903.

This sequence belongs to the RNA polymerase beta' chain family. The RNAP catalytic core consists of 2 alpha, 1 beta, 1 beta' and 1 omega subunit. When a sigma factor is associated with the core the holoenzyme is formed, which can initiate transcription. Mg(2+) is required as a cofactor. The cofactor is Zn(2+).

The enzyme catalyses RNA(n) + a ribonucleoside 5'-triphosphate = RNA(n+1) + diphosphate. In terms of biological role, DNA-dependent RNA polymerase catalyzes the transcription of DNA into RNA using the four ribonucleoside triphosphates as substrates. This chain is DNA-directed RNA polymerase subunit beta', found in Bacillus cytotoxicus (strain DSM 22905 / CIP 110041 / 391-98 / NVH 391-98).